Here is a 274-residue protein sequence, read N- to C-terminus: Orotidine 5'-phosphate decarboxylase (274 aa).

K96 functions as the Proton donor in the catalytic mechanism.

Belongs to the OMP decarboxylase family. Type 2 subfamily.

It catalyses the reaction orotidine 5'-phosphate + H(+) = UMP + CO2. The protein operates within pyrimidine metabolism; UMP biosynthesis via de novo pathway; UMP from orotate: step 2/2. The sequence is that of Orotidine 5'-phosphate decarboxylase from Bacteroides fragilis (strain ATCC 25285 / DSM 2151 / CCUG 4856 / JCM 11019 / LMG 10263 / NCTC 9343 / Onslow / VPI 2553 / EN-2).